The chain runs to 256 residues: Dihydroorotate dehydrogenase B (NAD(+)), electron transfer subunit (256 aa).

The FAD-binding FR-type domain maps to 1 to 101 (MKKAHLTVQS…LGPLGNGFPV (101 aa)). FAD is bound by residues 52 to 55 (RPLS), 69 to 71 (IYR), and 76 to 77 (GT). 4 residues coordinate [2Fe-2S] cluster: C220, C225, C228, and C243.

The protein belongs to the PyrK family. In terms of assembly, heterotetramer of 2 PyrK and 2 PyrD type B subunits. Requires [2Fe-2S] cluster as cofactor. FAD serves as cofactor.

It participates in pyrimidine metabolism; UMP biosynthesis via de novo pathway; orotate from (S)-dihydroorotate (NAD(+) route): step 1/1. Responsible for channeling the electrons from the oxidation of dihydroorotate from the FMN redox center in the PyrD type B subunit to the ultimate electron acceptor NAD(+). The protein is Dihydroorotate dehydrogenase B (NAD(+)), electron transfer subunit of Bacillus velezensis (strain DSM 23117 / BGSC 10A6 / LMG 26770 / FZB42) (Bacillus amyloliquefaciens subsp. plantarum).